Here is a 522-residue protein sequence, read N- to C-terminus: Target of rapamycin complex 2 subunit MAPKAP1 (522 aa).

An N-acetylalanine modification is found at alanine 2. The tract at residues 2–184 (AFLDNPTIIL…KKIDVYLPLH (183 aa)) is interaction with MAP3K2. The segment at 2–267 (AFLDNPTIIL…GFSTLALVEK (266 aa)) is interaction with NBN. At threonine 86 the chain carries Phosphothreonine. Phosphoserine is present on residues serine 128, serine 186, serine 315, and serine 356. The 129-residue stretch at 139 to 267 (QSILSVRLEQ…GFSTLALVEK (129 aa)) folds into the CRIM domain. Positions 279-353 (LFVRINAAHG…QSAWEFCLVR (75 aa)) are SIN1-type RBD. The SIN1-type PH domain occupies 382–487 (HYKSFKVSMI…IVLKVNYILE (106 aa)). Residue arginine 393 coordinates a 1,2-diacyl-sn-glycero-3-phospho-(1D-myo-inositol-3,4,5-trisphosphate). The residue at position 398 (threonine 398) is a Phosphothreonine. A 1,2-diacyl-sn-glycero-3-phospho-(1D-myo-inositol-3,4,5-trisphosphate)-binding residues include lysine 428 and lysine 464. The interaction with ATF2 stretch occupies residues 468–522 (FESDAATVNEIVLKVNYILESRASTARADYFAQKQRKLNRRTSFSFQKEKKSGQQ). Phosphoserine is present on serine 510.

This sequence belongs to the SIN1 family. Component of the mechanistic target of rapamycin complex 2 (mTORC2), consisting in two heterotretramers composed of MTOR, MLST8, RICTOR and MAPKAP1/SIN1. The mTORC2 core complex associates with PRR5/PROTOR1 and/or PRR5L/PROTOR2. Contrary to mTORC1, mTORC2 does not bind to and is not sensitive to FKBP12-rapamycin. Interacts with MAP3K2. Interacts with ATF2. Interacts with MAPK8. Interacts with GTP-bound HRAS and KRAS; inhibiting their activity. Interacts with IFNAR2. In terms of processing, phosphorylation at Ser-128 by PKC promotes relocalization to the perinuclear region, where the mTORC2 complex specifically mediates phosphorylation of SGK1. Phosphorylated at Thr-86 by AKT1 or RPS6KB1 in the presence of growth factors; the effect of this phosphorylation is however unclear. According to two studies, phosphorylation at Thr-86 by AKT1 is part of a positive feedback loop that increases mTORC2 activation. According to another study, phosphorylation at Thr-86 and Thr-398 by RPS6KB1 promotes dissociation from the mTORC2 complex, leading to inhibit mTORC2 signaling.

The protein localises to the cell membrane. The protein resides in the endoplasmic reticulum membrane. It is found in the early endosome membrane. It localises to the late endosome membrane. Its subcellular location is the lysosome membrane. The protein localises to the golgi apparatus membrane. The protein resides in the mitochondrion outer membrane. It is found in the cytoplasm. It localises to the perinuclear region. Its subcellular location is the nucleus. Its activity is regulated as follows. Phosphatidylinositol 3,4,5-trisphosphate (PI(3,4,5)P3) promotes MTOR activation by relieving MAPKAP1/SIN1-mediated inhibition of MTOR that takes place in absence of PI(3,4,5)P3. Functionally, component of the mechanistic target of rapamycin complex 2 (mTORC2), which transduces signals from growth factors to pathways involved in proliferation, cytoskeletal organization, lipogenesis and anabolic output. In response to growth factors, mTORC2 phosphorylates and activates AGC protein kinase family members, including AKT (AKT1, AKT2 and AKT3), PKC (PRKCA, PRKCB and PRKCE) and SGK1. In contrast to mTORC1, mTORC2 is nutrient-insensitive. Within the mTORC2 complex, MAPKAP1/SIN1 acts as a substrate adapter which recognizes and binds AGC protein kinase family members for phosphorylation by MTOR. mTORC2 plays a critical role in AKT1 activation by mediating phosphorylation of different sites depending on the context, such as 'Thr-450', 'Ser-473', 'Ser-477' or 'Thr-479', facilitating the phosphorylation of the activation loop of AKT1 on 'Thr-308' by PDPK1/PDK1 which is a prerequisite for full activation. mTORC2 catalyzes the phosphorylation of SGK1 at 'Ser-422' and of PRKCA on 'Ser-657'. The mTORC2 complex also phosphorylates various proteins involved in insulin signaling, such as FBXW8 and IGF2BP1. mTORC2 acts upstream of Rho GTPases to regulate the actin cytoskeleton, probably by activating one or more Rho-type guanine nucleotide exchange factors. mTORC2 promotes the serum-induced formation of stress-fibers or F-actin. MAPKAP1 inhibits MAP3K2 by preventing its dimerization and autophosphorylation. Inhibits HRAS and KRAS independently of mTORC2 complex. Enhances osmotic stress-induced phosphorylation of ATF2 and ATF2-mediated transcription. Involved in ciliogenesis, regulates cilia length through its interaction with CCDC28B independently of mTORC2 complex. The chain is Target of rapamycin complex 2 subunit MAPKAP1 (MAPKAP1) from Bos taurus (Bovine).